The chain runs to 346 residues: UPF0053 protein sll1254 (346 aa).

Transmembrane regions (helical) follow at residues 1–21, 58–78, 87–107, and 121–141; these read MLEIVAAIFIVLLGSGICSCA, IGTIVVLNNIFNIVGSITIGA, AWMGVFSGILTLLIIVFGEII, and LLIAIPVRFLTLIFTPLVWLI. Residues 1–179 form the CNNM transmembrane domain; the sequence is MLEIVAAIFI…YKEGVIEGDE (179 aa). 2 CBS domains span residues 198–259 and 263–320; these read MTPR…GYKT and LARP…IVDE.

Belongs to the UPF0053 family.

The protein resides in the cell membrane. This chain is UPF0053 protein sll1254, found in Synechocystis sp. (strain ATCC 27184 / PCC 6803 / Kazusa).